The primary structure comprises 179 residues: ATP synthase subunit b (179 aa).

The helical transmembrane segment at 27–47 (TAITFLVMLVVLGKFAWGPIV) threads the bilayer.

The protein belongs to the ATPase B chain family. F-type ATPases have 2 components, F(1) - the catalytic core - and F(0) - the membrane proton channel. F(1) has five subunits: alpha(3), beta(3), gamma(1), delta(1), epsilon(1). F(0) has three main subunits: a(1), b(2) and c(10-14). The alpha and beta chains form an alternating ring which encloses part of the gamma chain. F(1) is attached to F(0) by a central stalk formed by the gamma and epsilon chains, while a peripheral stalk is formed by the delta and b chains.

The protein localises to the cell inner membrane. Its function is as follows. F(1)F(0) ATP synthase produces ATP from ADP in the presence of a proton or sodium gradient. F-type ATPases consist of two structural domains, F(1) containing the extramembraneous catalytic core and F(0) containing the membrane proton channel, linked together by a central stalk and a peripheral stalk. During catalysis, ATP synthesis in the catalytic domain of F(1) is coupled via a rotary mechanism of the central stalk subunits to proton translocation. Functionally, component of the F(0) channel, it forms part of the peripheral stalk, linking F(1) to F(0). This is ATP synthase subunit b from Anaeromyxobacter sp. (strain K).